Consider the following 248-residue polypeptide: MSFTVVIPARFGSSRFPGKPLALIDGKPMIQHVVERAKEAGAESIIVATDDERIQNVVEGFAQVCMTSVDHQSGTERIAEVIQTQNISGDTIVVNVQGDEPFIPAENIKQVATNLANAPQCQMATLSTPIVSVADVFNPNIVKVLVNEKGESIYFSRSPIPFERDYMMANPNKANTALYNRHIGIYAYRADYVNQYVNYAPSALEQIESLEQLRAIWYGDKIHCEVAVAPPPVGIDTPEDLERLLETI.

It belongs to the KdsB family.

The protein resides in the cytoplasm. It carries out the reaction 3-deoxy-alpha-D-manno-oct-2-ulosonate + CTP = CMP-3-deoxy-beta-D-manno-octulosonate + diphosphate. It participates in nucleotide-sugar biosynthesis; CMP-3-deoxy-D-manno-octulosonate biosynthesis; CMP-3-deoxy-D-manno-octulosonate from 3-deoxy-D-manno-octulosonate and CTP: step 1/1. Its pathway is bacterial outer membrane biogenesis; lipopolysaccharide biosynthesis. Functionally, activates KDO (a required 8-carbon sugar) for incorporation into bacterial lipopolysaccharide in Gram-negative bacteria. This is 3-deoxy-manno-octulosonate cytidylyltransferase from Alteromonas mediterranea (strain DSM 17117 / CIP 110805 / LMG 28347 / Deep ecotype).